The sequence spans 266 residues: Interleukin-1 beta (266 aa).

Residues 1-113 constitute a propeptide that is removed on maturation; the sequence is MATVPEPINE…ETSSDELLCD (113 aa).

Belongs to the IL-1 family. Monomer. In its precursor form, weakly interacts with full-length MEFV; the mature cytokine does not interact at all. Interacts with integrins ITGAV:ITGBV and ITGA5:ITGB1; integrin-binding is required for IL1B signaling. Interacts with cargo receptor TMED10; the interaction is direct and is required for the secretion of IL1B mature form. Interacts with HSP90AB1; the interaction facilitates cargo translocation into the ERGIC. Interacts with HSP90B1; the interaction facilitates cargo translocation into the ERGIC.

It is found in the cytoplasm. It localises to the cytosol. Its subcellular location is the secreted. The protein localises to the lysosome. The protein resides in the extracellular exosome. Potent pro-inflammatory cytokine. Initially discovered as the major endogenous pyrogen, induces prostaglandin synthesis, neutrophil influx and activation, T-cell activation and cytokine production, B-cell activation and antibody production, and fibroblast proliferation and collagen production. Promotes Th17 differentiation of T-cells. Synergizes with IL12/interleukin-12 to induce IFNG synthesis from T-helper 1 (Th1) cells. Plays a role in angiogenesis by inducing VEGF production synergistically with TNF and IL6. Involved in transduction of inflammation downstream of pyroptosis: its mature form is specifically released in the extracellular milieu by passing through the gasdermin-D (GSDMD) pore. This Capra hircus (Goat) protein is Interleukin-1 beta (IL1B).